We begin with the raw amino-acid sequence, 463 residues long: Rop guanine nucleotide exchange factor 4 (463 aa).

Disordered regions lie at residues 1 to 25 and 55 to 87; these read MESSSNSDQNEGTPTSSVSSPYRRT and GHEEDVSEDAEEPKDDVVNDVHGDGDEEDSDID. The span at 59–68 shows a compositional bias: acidic residues; sequence DVSEDAEEPK. Residues 69 to 78 show a composition bias toward basic and acidic residues; the sequence is DDVVNDVHGD. Residues 84–463 form the PRONE domain; it reads SDIDSAEDAE…VDRTVRNRDD (380 aa).

In terms of assembly, interacts with ARAC10/ROP11. In terms of tissue distribution, expressed in root vascular tissue and trichoblast cell files. Expressed in root metaxylem cell files. Expressed in guard cells of cotyledons, rosette leaves, sepals, petal, stigmas and siliques. Expressed in root metaxylem cell files.

The protein resides in the cytoplasm. The protein localises to the cell membrane. In terms of biological role, guanine-nucleotide exchange factor (GEF) that acts as an activator of Rop (Rho of plants) GTPases by promoting the exchange of GDP for GTP. In association with ROPGEF1, acts as a specific regulator of ARAC10/ROP11 function in ABA-mediated stomatal closure. This is Rop guanine nucleotide exchange factor 4 (ROPGEF4) from Arabidopsis thaliana (Mouse-ear cress).